We begin with the raw amino-acid sequence, 81 residues long: Three-finger toxin MALT0057C (81 aa).

An N-terminal signal peptide occupies residues 1–21 (MKTLLLTLVVVTIVCLDFGHT). 4 cysteine pairs are disulfide-bonded: cysteine 24–cysteine 43, cysteine 38–cysteine 60, cysteine 62–cysteine 73, and cysteine 74–cysteine 79.

The protein belongs to the three-finger toxin family. Short-chain subfamily. Type I alpha-neurotoxin sub-subfamily. In terms of tissue distribution, expressed by the venom gland.

Its subcellular location is the secreted. Binds to muscle nicotinic acetylcholine receptor (nAChR) and inhibit acetylcholine from binding to the receptor, thereby impairing neuromuscular transmission. The chain is Three-finger toxin MALT0057C from Micrurus altirostris (Uruguayan coral snake).